Consider the following 119-residue polypeptide: Large ribosomal subunit protein bL19 (119 aa).

The protein belongs to the bacterial ribosomal protein bL19 family.

Its function is as follows. This protein is located at the 30S-50S ribosomal subunit interface and may play a role in the structure and function of the aminoacyl-tRNA binding site. This chain is Large ribosomal subunit protein bL19, found in Leuconostoc mesenteroides subsp. mesenteroides (strain ATCC 8293 / DSM 20343 / BCRC 11652 / CCM 1803 / JCM 6124 / NCDO 523 / NBRC 100496 / NCIMB 8023 / NCTC 12954 / NRRL B-1118 / 37Y).